Here is a 262-residue protein sequence, read N- to C-terminus: Small ribosomal subunit protein uS2 (262 aa).

The segment at 236 to 262 is disordered; the sequence is AGGAAEAPAAEDVQTEEAAAPEADSAE.

The protein belongs to the universal ribosomal protein uS2 family.

This is Small ribosomal subunit protein uS2 from Psychrobacter sp. (strain PRwf-1).